The chain runs to 314 residues: MTSVIFMGTPQFSAPILSSLIDNGYDVLAVVTQPDRRVGRKHVLTASPVKQVAVAHDIEVLQPEKISGSSEMARAIELAPDLIVTAAFGQFLPTKLLKAAKVAAVNVHASLLPKYRGGAPVHYAIMNGDSETGVSIMFMEKKMDAGAVLAQRAIPITDQDDVGTMFAKLSDLGRDLLLETLPKLLAGELTPVPQDESQVSFSPTIKPEEERVDINLSARMIDCKVRALRPFPTAHIYLNGVRTKLWHVTVLDQKTDLQPGAVVSRDKHHLAIATGEQGVLSLDELQPAGKPKLSITDYLNGTTDALTVGEQVAE.

110 to 113 (SLLP) serves as a coordination point for (6S)-5,6,7,8-tetrahydrofolate.

The protein belongs to the Fmt family.

It catalyses the reaction L-methionyl-tRNA(fMet) + (6R)-10-formyltetrahydrofolate = N-formyl-L-methionyl-tRNA(fMet) + (6S)-5,6,7,8-tetrahydrofolate + H(+). Its function is as follows. Attaches a formyl group to the free amino group of methionyl-tRNA(fMet). The formyl group appears to play a dual role in the initiator identity of N-formylmethionyl-tRNA by promoting its recognition by IF2 and preventing the misappropriation of this tRNA by the elongation apparatus. This chain is Methionyl-tRNA formyltransferase, found in Levilactobacillus brevis (strain ATCC 367 / BCRC 12310 / CIP 105137 / JCM 1170 / LMG 11437 / NCIMB 947 / NCTC 947) (Lactobacillus brevis).